A 55-amino-acid chain; its full sequence is Large ribosomal subunit protein bL32 (55 aa).

Over residues 1 to 19 (MAVPKRRMSRANTHTRRSQ) the composition is skewed to basic residues. The tract at residues 1-21 (MAVPKRRMSRANTHTRRSQWK) is disordered.

It belongs to the bacterial ribosomal protein bL32 family.

In Corynebacterium kroppenstedtii (strain DSM 44385 / JCM 11950 / CIP 105744 / CCUG 35717), this protein is Large ribosomal subunit protein bL32.